The primary structure comprises 422 residues: Gamma-glutamyl phosphate reductase (422 aa).

The protein belongs to the gamma-glutamyl phosphate reductase family.

It is found in the cytoplasm. It catalyses the reaction L-glutamate 5-semialdehyde + phosphate + NADP(+) = L-glutamyl 5-phosphate + NADPH + H(+). Its pathway is amino-acid biosynthesis; L-proline biosynthesis; L-glutamate 5-semialdehyde from L-glutamate: step 2/2. Catalyzes the NADPH-dependent reduction of L-glutamate 5-phosphate into L-glutamate 5-semialdehyde and phosphate. The product spontaneously undergoes cyclization to form 1-pyrroline-5-carboxylate. In Chlorobium phaeovibrioides (strain DSM 265 / 1930) (Prosthecochloris vibrioformis (strain DSM 265)), this protein is Gamma-glutamyl phosphate reductase.